The following is a 205-amino-acid chain: MAQINVIGQNGGRTIELPLPEVNSGVLHEVVTWQLASRRRGTASTRTRAQVSKTGRKMYGQKGTGNARHGDRSVPTFVGGGVAFGPKPRSYDYTLPRQVRQLGLAMAIASRQEGGKLVAVDGFDIADAKTKNFISWAKQNGLDGTEKVLLVTDDENTRRAARNVSWVSVLPVAGVNVYDILRHDRLVIDAAALEIVEEEAGEEQQ.

This sequence belongs to the universal ribosomal protein uL4 family. As to quaternary structure, part of the 50S ribosomal subunit. Contacts proteins L15 and L34.

Functionally, one of the primary rRNA binding proteins, this protein initially binds near the 5'-end of the 23S rRNA. It is important during the early stages of 50S assembly. Makes multiple contacts with different domains of the 23S rRNA in the assembled 50S subunit. In terms of biological role, this protein is located close to the polypeptide exit tunnel, and interacts with the modified macrolide azithromycin, which blocks the tunnel. The polypeptide is Large ribosomal subunit protein uL4 (rplD) (Deinococcus radiodurans (strain ATCC 13939 / DSM 20539 / JCM 16871 / CCUG 27074 / LMG 4051 / NBRC 15346 / NCIMB 9279 / VKM B-1422 / R1)).